A 625-amino-acid chain; its full sequence is tRNA uridine 5-carboxymethylaminomethyl modification enzyme MnmG (625 aa).

11–16 (GAGHAG) is a binding site for FAD. An NAD(+)-binding site is contributed by 271 to 285 (GPRYCPSIETKIVTF).

This sequence belongs to the MnmG family. Homodimer. Heterotetramer of two MnmE and two MnmG subunits. FAD serves as cofactor.

It localises to the cytoplasm. NAD-binding protein involved in the addition of a carboxymethylaminomethyl (cmnm) group at the wobble position (U34) of certain tRNAs, forming tRNA-cmnm(5)s(2)U34. The polypeptide is tRNA uridine 5-carboxymethylaminomethyl modification enzyme MnmG (Porphyromonas gingivalis (strain ATCC BAA-308 / W83)).